The primary structure comprises 344 residues: S-methyl-5'-thioadenosine phosphorylase (344 aa).

Phosphate contacts are provided by residues Thr51, 99-100, and 132-133; these read RH and SA. Met234 is a binding site for substrate. Ser235 contacts phosphate. Residue 258-260 coordinates substrate; that stretch reads DYD.

This sequence belongs to the PNP/MTAP phosphorylase family. MTAP subfamily. As to quaternary structure, homotrimer.

Its subcellular location is the cytoplasm. It localises to the nucleus. It carries out the reaction S-methyl-5'-thioadenosine + phosphate = 5-(methylsulfanyl)-alpha-D-ribose 1-phosphate + adenine. The protein operates within amino-acid biosynthesis; L-methionine biosynthesis via salvage pathway; S-methyl-5-thio-alpha-D-ribose 1-phosphate from S-methyl-5'-thioadenosine (phosphorylase route): step 1/1. Functionally, catalyzes the reversible phosphorylation of S-methyl-5'-thioadenosine (MTA) to adenine and 5-methylthioribose-1-phosphate. Involved in the breakdown of MTA, a major by-product of polyamine biosynthesis. Responsible for the first step in the methionine salvage pathway after MTA has been generated from S-adenosylmethionine. Has broad substrate specificity with 6-aminopurine nucleosides as preferred substrates. This is S-methyl-5'-thioadenosine phosphorylase from Phaeosphaeria nodorum (strain SN15 / ATCC MYA-4574 / FGSC 10173) (Glume blotch fungus).